We begin with the raw amino-acid sequence, 237 residues long: Ribosomal RNA small subunit methyltransferase G (237 aa).

Residues glycine 78, phenylalanine 83, 129 to 130 (AE), and arginine 148 each bind S-adenosyl-L-methionine.

It belongs to the methyltransferase superfamily. RNA methyltransferase RsmG family.

The protein localises to the cytoplasm. Functionally, specifically methylates the N7 position of a guanine in 16S rRNA. This is Ribosomal RNA small subunit methyltransferase G from Streptococcus equi subsp. zooepidemicus (strain MGCS10565).